The chain runs to 164 residues: UPF0114 protein Spro_2386 (164 aa).

3 consecutive transmembrane segments (helical) span residues 15-35, 53-73, and 136-156; these read LLAP…IKFF, LVLT…LVMV, and LMWY…MGYL.

It belongs to the UPF0114 family.

The protein resides in the cell membrane. This chain is UPF0114 protein Spro_2386, found in Serratia proteamaculans (strain 568).